Here is a 518-residue protein sequence, read N- to C-terminus: Dihydro-ML-236C monooxygenase mlcC (518 aa).

At 1–31 the chain is on the cytoplasmic side; that stretch reads MLGQVLLTVESYQWVSTPQALVAVAVLLSLI. Residues 32 to 48 traverse the membrane as a helical; Signal-anchor for type II membrane protein segment; sequence AYRLRGRQSELQVYNPK. The Lumenal portion of the chain corresponds to 49–518; sequence KWWELTTMRA…EDIPLPHDRC (470 aa). Cys-454 contacts heme.

Belongs to the cytochrome P450 family. Requires heme as cofactor.

It is found in the endoplasmic reticulum membrane. The catalysed reaction is dihydro-ML-236C carboxylate + reduced [NADPH--hemoprotein reductase] + O2 = ML-236C carboxylate + oxidized [NADPH--hemoprotein reductase] + 2 H2O + H(+). The enzyme catalyses ML-236C carboxylate + reduced [NADPH--hemoprotein reductase] + O2 = ML-236A carboxylate + oxidized [NADPH--hemoprotein reductase] + H2O + H(+). It participates in polyketide biosynthesis. Functionally, dihydro-ML-236C carboxylate monooxygenase; part of the gene cluster that mediates the biosynthesis of compactin, also known as mevastatin or ML-236B, and which acts as a potent competitive inhibitor of HMG-CoA reductase. Compactin biosynthesis is performed in two stages. The first stage is catalyzed by the nonaketide synthase mlcA, which belongs to type I polyketide synthases and catalyzes the iterative nine-step formation of the polyketide. This PKS stage is completed by the action of dehydrogenase mlcG, which catalyzes the NADPH-dependent reduction of the unsaturated tetra-, penta- and heptaketide intermediates that arise during the mlcA-mediated biosynthesis of the nonaketide chain and leads to dihydro-ML-236C carboxylate. Covalently bound dihydro-ML-236C carboxylate is released from mlcA by the mlcF esterase. Conversion of dihydro-ML-236C carboxylate into ML-236A carboxylate is subsequently performed with the participation of molecular oxygen and P450 monoogygenase mlcC. Finally, mlcH performs the conversion of ML-236A carboxylate to ML-236B/compactin carboxylate through the addition of the side-chain diketide moiety produced by the diketide synthase mlcB. The chain is Dihydro-ML-236C monooxygenase mlcC from Penicillium citrinum.